A 452-amino-acid chain; its full sequence is Phosphoglucosamine mutase (452 aa).

Residue Ser112 is the Phosphoserine intermediate of the active site. The Mg(2+) site is built by Ser112, Asp251, Asp253, and Asp255. The residue at position 112 (Ser112) is a Phosphoserine.

Belongs to the phosphohexose mutase family. Mg(2+) is required as a cofactor. In terms of processing, activated by phosphorylation.

It catalyses the reaction alpha-D-glucosamine 1-phosphate = D-glucosamine 6-phosphate. Catalyzes the conversion of glucosamine-6-phosphate to glucosamine-1-phosphate. This Bordetella pertussis (strain Tohama I / ATCC BAA-589 / NCTC 13251) protein is Phosphoglucosamine mutase.